The sequence spans 470 residues: Argininosuccinate lyase (470 aa).

It belongs to the lyase 1 family. Argininosuccinate lyase subfamily.

Its subcellular location is the cytoplasm. The enzyme catalyses 2-(N(omega)-L-arginino)succinate = fumarate + L-arginine. It functions in the pathway amino-acid biosynthesis; L-arginine biosynthesis; L-arginine from L-ornithine and carbamoyl phosphate: step 3/3. In Ehrlichia chaffeensis (strain ATCC CRL-10679 / Arkansas), this protein is Argininosuccinate lyase.